Here is a 248-residue protein sequence, read N- to C-terminus: Putative amino-acid ABC transporter-binding protein PatH (248 aa).

The N-terminal stretch at 1-21 (MKNWIKVAVAAIALSAATVQA) is a signal peptide.

It belongs to the bacterial solute-binding protein 3 family.

The protein localises to the periplasm. In terms of biological role, probably part of a binding-protein-dependent transport system for an amino acid. This is Putative amino-acid ABC transporter-binding protein PatH (patH) from Vibrio harveyi (Beneckea harveyi).